Consider the following 550-residue polypeptide: Methionine--tRNA ligase (550 aa).

A 'HIGH' region motif is present at residues 13–23 (PYANGPLHFGH). Residues cysteine 145, cysteine 148, cysteine 158, and cysteine 161 each contribute to the Zn(2+) site. The 'KMSKS' region motif lies at 331-335 (QFSKS). Lysine 334 contributes to the ATP binding site.

Belongs to the class-I aminoacyl-tRNA synthetase family. MetG type 1 subfamily. Monomer. Zn(2+) serves as cofactor.

It localises to the cytoplasm. It catalyses the reaction tRNA(Met) + L-methionine + ATP = L-methionyl-tRNA(Met) + AMP + diphosphate. In terms of biological role, is required not only for elongation of protein synthesis but also for the initiation of all mRNA translation through initiator tRNA(fMet) aminoacylation. This Chlamydia trachomatis serovar D (strain ATCC VR-885 / DSM 19411 / UW-3/Cx) protein is Methionine--tRNA ligase (metG).